The chain runs to 207 residues: Guanylate kinase (207 aa).

Positions 4-184 (GTLYIVSAPS…ALMDFKAILR (181 aa)) constitute a Guanylate kinase-like domain. 11–18 (APSGAGKS) serves as a coordination point for ATP.

Belongs to the guanylate kinase family.

Its subcellular location is the cytoplasm. It catalyses the reaction GMP + ATP = GDP + ADP. Its function is as follows. Essential for recycling GMP and indirectly, cGMP. The protein is Guanylate kinase of Vibrio parahaemolyticus serotype O3:K6 (strain RIMD 2210633).